Reading from the N-terminus, the 539-residue chain is Chaperonin GroEL (539 aa).

Residues 29 to 32, 86 to 90, Gly413, 476 to 478, and Asp492 each bind ATP; these read TLGP, DGTTT, and NAA.

Belongs to the chaperonin (HSP60) family. Forms a cylinder of 14 subunits composed of two heptameric rings stacked back-to-back. Interacts with the co-chaperonin GroES.

The protein localises to the cytoplasm. It catalyses the reaction ATP + H2O + a folded polypeptide = ADP + phosphate + an unfolded polypeptide.. In terms of biological role, together with its co-chaperonin GroES, plays an essential role in assisting protein folding. The GroEL-GroES system forms a nano-cage that allows encapsulation of the non-native substrate proteins and provides a physical environment optimized to promote and accelerate protein folding. The chain is Chaperonin GroEL from Macrococcus caseolyticus (strain JCSC5402) (Macrococcoides caseolyticum).